We begin with the raw amino-acid sequence, 72 residues long: Gas vesicle protein A (72 aa).

This sequence belongs to the gas vesicle GvpA family. As to quaternary structure, the gas vesicle shell is 2 nm thick and consists of a single layer of this protein. It forms helical ribs nearly perpendicular to the long axis of the vesicle.

It localises to the gas vesicle shell. In terms of biological role, gas vesicles are hollow, gas filled proteinaceous nanostructures found in some microorganisms. During planktonic growth they allow positioning of the organism at a favorable depth for light or nutrient acquisition. GvpA forms the protein shell. The chain is Gas vesicle protein A from Synechococcus sp. (strain JA-3-3Ab) (Cyanobacteria bacterium Yellowstone A-Prime).